Here is a 305-residue protein sequence, read N- to C-terminus: Ribosomal protein L11 methyltransferase (305 aa).

Residues Thr149, Gly176, Asp198, and Asn240 each coordinate S-adenosyl-L-methionine.

Belongs to the methyltransferase superfamily. PrmA family.

It is found in the cytoplasm. The enzyme catalyses L-lysyl-[protein] + 3 S-adenosyl-L-methionine = N(6),N(6),N(6)-trimethyl-L-lysyl-[protein] + 3 S-adenosyl-L-homocysteine + 3 H(+). Functionally, methylates ribosomal protein L11. The chain is Ribosomal protein L11 methyltransferase from Trichlorobacter lovleyi (strain ATCC BAA-1151 / DSM 17278 / SZ) (Geobacter lovleyi).